The following is a 350-amino-acid chain: Holliday junction branch migration complex subunit RuvB (350 aa).

A large ATPase domain (RuvB-L) region spans residues 1-183 (MSAERLVNPH…FVAVHRLVFY (183 aa)). ATP is bound by residues Leu22, Arg23, Gly64, Lys67, Thr68, Ser69, 130 to 132 (EDF), Arg173, Tyr183, and Arg220. Thr68 contacts Mg(2+). The interval 184-254 (SDDAMTEIVS…VARDALAQLE (71 aa)) is small ATPAse domain (RuvB-S). The tract at residues 257–350 (ELGLDENDRR…ESGPQQATLF (94 aa)) is head domain (RuvB-H). DNA is bound by residues Arg312 and Arg317. Residues 331 to 350 (YPERTLPADDESGPQQATLF) form a disordered region.

Belongs to the RuvB family. In terms of assembly, homohexamer. Forms an RuvA(8)-RuvB(12)-Holliday junction (HJ) complex. HJ DNA is sandwiched between 2 RuvA tetramers; dsDNA enters through RuvA and exits via RuvB. An RuvB hexamer assembles on each DNA strand where it exits the tetramer. Each RuvB hexamer is contacted by two RuvA subunits (via domain III) on 2 adjacent RuvB subunits; this complex drives branch migration. In the full resolvosome a probable DNA-RuvA(4)-RuvB(12)-RuvC(2) complex forms which resolves the HJ.

It localises to the cytoplasm. The catalysed reaction is ATP + H2O = ADP + phosphate + H(+). Its function is as follows. The RuvA-RuvB-RuvC complex processes Holliday junction (HJ) DNA during genetic recombination and DNA repair, while the RuvA-RuvB complex plays an important role in the rescue of blocked DNA replication forks via replication fork reversal (RFR). RuvA specifically binds to HJ cruciform DNA, conferring on it an open structure. The RuvB hexamer acts as an ATP-dependent pump, pulling dsDNA into and through the RuvAB complex. RuvB forms 2 homohexamers on either side of HJ DNA bound by 1 or 2 RuvA tetramers; 4 subunits per hexamer contact DNA at a time. Coordinated motions by a converter formed by DNA-disengaged RuvB subunits stimulates ATP hydrolysis and nucleotide exchange. Immobilization of the converter enables RuvB to convert the ATP-contained energy into a lever motion, pulling 2 nucleotides of DNA out of the RuvA tetramer per ATP hydrolyzed, thus driving DNA branch migration. The RuvB motors rotate together with the DNA substrate, which together with the progressing nucleotide cycle form the mechanistic basis for DNA recombination by continuous HJ branch migration. Branch migration allows RuvC to scan DNA until it finds its consensus sequence, where it cleaves and resolves cruciform DNA. The sequence is that of Holliday junction branch migration complex subunit RuvB from Chloroflexus aurantiacus (strain ATCC 29366 / DSM 635 / J-10-fl).